Reading from the N-terminus, the 309-residue chain is NADH-cytochrome b5 reductase 1 (309 aa).

A helical membrane pass occupies residues Phe-30 to Gly-50. In terms of domain architecture, FAD-binding FR-type spans Thr-60–Thr-165. FAD is bound by residues Thr-145–Gly-160 and His-171–Leu-208.

It belongs to the flavoprotein pyridine nucleotide cytochrome reductase family. As to quaternary structure, monomer. Component of the 2-(3-amino-3-carboxypropyl)histidine synthase complex composed of dph1, dph2, dph3 and a NADH-dependent reductase, predominantly cbr1. The cofactor is FAD.

It localises to the mitochondrion outer membrane. The catalysed reaction is 2 Fe(III)-[cytochrome b5] + NADH = 2 Fe(II)-[cytochrome b5] + NAD(+) + H(+). The enzyme catalyses 2 Fe(3+)-[Dph3] + NADH = 2 Fe(2+)-[Dph3] + NAD(+) + H(+). Its pathway is protein modification; peptidyl-diphthamide biosynthesis. NADH-dependent reductase for dph3 and cytochrome b5. Required for the first step of diphthamide biosynthesis, a post-translational modification of histidine which occurs in elongation factor 2. Dph1 and dph2 transfer a 3-amino-3-carboxypropyl (ACP) group from S-adenosyl-L-methionine (SAM) to a histidine residue, the reaction is assisted by a reduction system comprising dph3 and a NADH-dependent reductase, predominantly cbr1. By reducing dph3, also involved in the formation of the tRNA wobble base modification mcm5s 2U (5-methoxycarbonylmethyl-2-thiouridine), mediated by the elongator complex. The cytochrome b5/NADH cytochrome b5 reductase electron transfer system supports the catalytic activity of several sterol biosynthetic enzymes. This is NADH-cytochrome b5 reductase 1 (cbr1) from Aspergillus fumigatus (strain ATCC MYA-4609 / CBS 101355 / FGSC A1100 / Af293) (Neosartorya fumigata).